A 242-amino-acid polypeptide reads, in one-letter code: Uridylate kinase (242 aa).

16–19 (KVSG) contributes to the ATP binding site. Gly58 provides a ligand contact to UMP. ATP-binding residues include Gly59 and Arg63. UMP contacts are provided by residues Asp78 and 139–146 (TGNPFCTT). 4 residues coordinate ATP: Thr166, Gln167, Tyr172, and Asp175.

It belongs to the UMP kinase family. In terms of assembly, homohexamer.

It is found in the cytoplasm. The enzyme catalyses UMP + ATP = UDP + ADP. It participates in pyrimidine metabolism; CTP biosynthesis via de novo pathway; UDP from UMP (UMPK route): step 1/1. Inhibited by UTP. Functionally, catalyzes the reversible phosphorylation of UMP to UDP. In Rickettsia canadensis (strain McKiel), this protein is Uridylate kinase.